The sequence spans 154 residues: 6,7-dimethyl-8-ribityllumazine synthase (154 aa).

5-amino-6-(D-ribitylamino)uracil-binding positions include Phe22, 56–58, and 80–82; these read AFE and AVI. 85–86 provides a ligand contact to (2S)-2-hydroxy-3-oxobutyl phosphate; it reads AT. His88 serves as the catalytic Proton donor. Phe113 serves as a coordination point for 5-amino-6-(D-ribitylamino)uracil. Arg127 contacts (2S)-2-hydroxy-3-oxobutyl phosphate.

This sequence belongs to the DMRL synthase family.

It catalyses the reaction (2S)-2-hydroxy-3-oxobutyl phosphate + 5-amino-6-(D-ribitylamino)uracil = 6,7-dimethyl-8-(1-D-ribityl)lumazine + phosphate + 2 H2O + H(+). Its pathway is cofactor biosynthesis; riboflavin biosynthesis; riboflavin from 2-hydroxy-3-oxobutyl phosphate and 5-amino-6-(D-ribitylamino)uracil: step 1/2. Its function is as follows. Catalyzes the formation of 6,7-dimethyl-8-ribityllumazine by condensation of 5-amino-6-(D-ribitylamino)uracil with 3,4-dihydroxy-2-butanone 4-phosphate. This is the penultimate step in the biosynthesis of riboflavin. In Agathobacter rectalis (strain ATCC 33656 / DSM 3377 / JCM 17463 / KCTC 5835 / VPI 0990) (Eubacterium rectale), this protein is 6,7-dimethyl-8-ribityllumazine synthase.